A 564-amino-acid polypeptide reads, in one-letter code: E3 ubiquitin-protein ligase TRIM16 (564 aa).

Residues 1 to 70 are disordered; sequence MAELDLMAPG…DPAEQGDPAG (70 aa). The span at 24-39 shows a compositional bias: low complexity; the sequence is SPDSGSPSPDSGSASP. B box-type zinc fingers lie at residues 72 to 122 and 126 to 165; these read GKEV…LTEP and HNWRYCPAHHSPLSAFCCPDQQCICQDCCQEHSGHTIVSL. Ser-116 is modified (phosphoserine). Zn(2+) contacts are provided by Cys-131, His-134, Cys-153, and His-157. Coiled coils occupy residues 165 to 203, 243 to 274, and 320 to 340; these read LDAARRDKEAELQCTQLDLERKLKLNENAISRLQANQKS, AALSQANGIKAHLEYRSAEMEKSKQELERMAA, and HLIQLLENYKKKLQEFSKEEE. Ser-203 carries the post-translational modification Phosphoserine. One can recognise a B30.2/SPRY domain in the interval 355–553; it reads YWTSKPEPST…RIVDLGEEPE (199 aa).

This sequence belongs to the TRIM/RBCC family. As to quaternary structure, homodimerizes via its coiled-coil domain. Heterodimerizes with MID1, TRIM24 and PML. Interacts with Galectin-3/LGALS3 in a ULK1-dependent manner; this interaction mediates autophagy of damage endomembranes. Interacts with BECN1. Interacts with ATG16L1. Interacts with p62/SQSTM and LC3B/MAP1LC3B. Phosphorylated by ULK1. Post-translationally, auto-ubiquitinates via its B-Boxes.

It is found in the cytoplasm. It carries out the reaction S-ubiquitinyl-[E2 ubiquitin-conjugating enzyme]-L-cysteine + [acceptor protein]-L-lysine = [E2 ubiquitin-conjugating enzyme]-L-cysteine + N(6)-ubiquitinyl-[acceptor protein]-L-lysine.. Functionally, E3 ubiquitin ligase that plays an essential role in the organization of autophagic response and ubiquitination upon lysosomal and phagosomal damages. Plays a role in the stress-induced biogenesis and degradation of protein aggresomes by regulating the p62-KEAP1-NRF2 signaling and particularly by modulating the ubiquitination levels and thus stability of NRF2. Acts as a scaffold protein and facilitates autophagic degradation of protein aggregates by interacting with p62/SQSTM, ATG16L1 and LC3B/MAP1LC3B. In turn, protects the cell against oxidative stress-induced cell death as a consequence of endomembrane damage. The protein is E3 ubiquitin-protein ligase TRIM16 (TRIM16) of Pongo abelii (Sumatran orangutan).